Consider the following 622-residue polypeptide: Elongation factor 4 (622 aa).

In terms of domain architecture, tr-type G spans 17–201; that stretch reads ALIRNFCIIA…KVVAEVPAPV (185 aa). GTP contacts are provided by residues 29–34 and 148–151; these read DHGKST and NKID.

The protein belongs to the TRAFAC class translation factor GTPase superfamily. Classic translation factor GTPase family. LepA subfamily.

It localises to the cell membrane. It catalyses the reaction GTP + H2O = GDP + phosphate + H(+). In terms of biological role, required for accurate and efficient protein synthesis under certain stress conditions. May act as a fidelity factor of the translation reaction, by catalyzing a one-codon backward translocation of tRNAs on improperly translocated ribosomes. Back-translocation proceeds from a post-translocation (POST) complex to a pre-translocation (PRE) complex, thus giving elongation factor G a second chance to translocate the tRNAs correctly. Binds to ribosomes in a GTP-dependent manner. The sequence is that of Elongation factor 4 from Streptomyces coelicolor (strain ATCC BAA-471 / A3(2) / M145).